Here is a 413-residue protein sequence, read N- to C-terminus: MSEWKHLHQVDPEVAAAMDREKKRQKNNIELIASENFVSEAVMEAAGSVLTNKYAEGYPGKRYYGGCEFVDQVERLAIERAKRLFGAEHANVQPHSGANANMGVYFACLEPGDTVLGMNLAHGGHLTHGSPVNISGKYFRFVAYGVDAHTGRIDYDEVARIARETKPKLIVAGASAYPRVLDFARFRAIADEVGAMLMVDMAHIAGLVAAGLHPSPVPYAEFVTTTTHKTLRGPRGGMILCKQEWAAKVDKAIFPGLQGGPLMHIIAAKAVAFQEAMAPAFTAYQKQIAANAAALAKGLTDRGFQLVSGGTDNHLMLVDLRNKQLTGKEAEKRLDECRITVNKNAIPFDPQSPFVTSGIRIGTPAATSRGMDEAAMDQVAEAIHLCLSDGSEGAMQKAVAIVDALCARFPLYA.

(6S)-5,6,7,8-tetrahydrofolate-binding positions include Leu120 and 124 to 126; that span reads GHL. Lys229 is modified (N6-(pyridoxal phosphate)lysine). Residue 352–354 coordinates (6S)-5,6,7,8-tetrahydrofolate; that stretch reads SPF.

The protein belongs to the SHMT family. In terms of assembly, homodimer. Requires pyridoxal 5'-phosphate as cofactor.

Its subcellular location is the cytoplasm. The catalysed reaction is (6R)-5,10-methylene-5,6,7,8-tetrahydrofolate + glycine + H2O = (6S)-5,6,7,8-tetrahydrofolate + L-serine. It functions in the pathway one-carbon metabolism; tetrahydrofolate interconversion. It participates in amino-acid biosynthesis; glycine biosynthesis; glycine from L-serine: step 1/1. Functionally, catalyzes the reversible interconversion of serine and glycine with tetrahydrofolate (THF) serving as the one-carbon carrier. This reaction serves as the major source of one-carbon groups required for the biosynthesis of purines, thymidylate, methionine, and other important biomolecules. Also exhibits THF-independent aldolase activity toward beta-hydroxyamino acids, producing glycine and aldehydes, via a retro-aldol mechanism. This is Serine hydroxymethyltransferase from Heliobacterium modesticaldum (strain ATCC 51547 / Ice1).